A 47-amino-acid polypeptide reads, in one-letter code: Large ribosomal subunit protein eL40 (47 aa).

This sequence belongs to the eukaryotic ribosomal protein eL40 family.

This is Large ribosomal subunit protein eL40 from Methanocaldococcus jannaschii (strain ATCC 43067 / DSM 2661 / JAL-1 / JCM 10045 / NBRC 100440) (Methanococcus jannaschii).